The following is a 346-amino-acid chain: Elongation factor Ts (346 aa).

The involved in Mg(2+) ion dislocation from EF-Tu stretch occupies residues 80–83 (TDFV).

Belongs to the EF-Ts family.

The protein resides in the cytoplasm. In terms of biological role, associates with the EF-Tu.GDP complex and induces the exchange of GDP to GTP. It remains bound to the aminoacyl-tRNA.EF-Tu.GTP complex up to the GTP hydrolysis stage on the ribosome. The sequence is that of Elongation factor Ts from Streptococcus pyogenes serotype M3 (strain ATCC BAA-595 / MGAS315).